A 423-amino-acid chain; its full sequence is Phosphoribosylamine--glycine ligase (423 aa).

Positions 107-312 constitute an ATP-grasp domain; the sequence is KDLCARYGIP…LLPLLYAAAT (206 aa). 133-193 is a binding site for ATP; the sequence is IREEGAPIVI…EAYLDGEEAS (61 aa). Glutamate 282 and asparagine 284 together coordinate Mg(2+).

This sequence belongs to the GARS family. Requires Mg(2+) as cofactor. The cofactor is Mn(2+).

It carries out the reaction 5-phospho-beta-D-ribosylamine + glycine + ATP = N(1)-(5-phospho-beta-D-ribosyl)glycinamide + ADP + phosphate + H(+). It functions in the pathway purine metabolism; IMP biosynthesis via de novo pathway; N(1)-(5-phospho-D-ribosyl)glycinamide from 5-phospho-alpha-D-ribose 1-diphosphate: step 2/2. The polypeptide is Phosphoribosylamine--glycine ligase (Rhizobium meliloti (strain 1021) (Ensifer meliloti)).